Reading from the N-terminus, the 196-residue chain is dITP/XTP pyrophosphatase (196 aa).

10-15 is a substrate binding site; the sequence is TTNPHK. The Proton acceptor role is filled by D68. D68 contacts Mg(2+). Residues S69, 148 to 151, and 175 to 176 contribute to the substrate site; these read FGYD and HR.

The protein belongs to the HAM1 NTPase family. In terms of assembly, homodimer. It depends on Mg(2+) as a cofactor.

It carries out the reaction XTP + H2O = XMP + diphosphate + H(+). The enzyme catalyses dITP + H2O = dIMP + diphosphate + H(+). It catalyses the reaction ITP + H2O = IMP + diphosphate + H(+). Pyrophosphatase that catalyzes the hydrolysis of nucleoside triphosphates to their monophosphate derivatives, with a high preference for the non-canonical purine nucleotides XTP (xanthosine triphosphate), dITP (deoxyinosine triphosphate) and ITP. Seems to function as a house-cleaning enzyme that removes non-canonical purine nucleotides from the nucleotide pool, thus preventing their incorporation into DNA/RNA and avoiding chromosomal lesions. This is dITP/XTP pyrophosphatase from Thermotoga maritima (strain ATCC 43589 / DSM 3109 / JCM 10099 / NBRC 100826 / MSB8).